Consider the following 126-residue polypeptide: Late histone H2A.3, gonadal (126 aa).

Residues 1–18 show a composition bias toward basic residues; that stretch reads MSGRGKGAKAKGKAKSRS. The interval 1-21 is disordered; it reads MSGRGKGAKAKGKAKSRSSRA. N-acetylserine is present on serine 2. Serine 2 carries the phosphoserine modification. The residue at position 104 (glutamine 104) is an N5-methylglutamine. Lysine 119 is covalently cross-linked (Glycyl lysine isopeptide (Lys-Gly) (interchain with G-Cter in ubiquitin)).

This sequence belongs to the histone H2A family. As to quaternary structure, the nucleosome is a histone octamer containing two molecules each of H2A, H2B, H3 and H4 assembled in one H3-H4 heterotetramer and two H2A-H2B heterodimers. The octamer wraps approximately 147 bp of DNA. Post-translationally, monoubiquitination of Lys-119 gives a specific tag for epigenetic transcriptional repression. In terms of processing, phosphorylation of Ser-2 directly represses transcription.

The protein localises to the nucleus. The protein resides in the chromosome. In terms of biological role, core component of nucleosome. Nucleosomes wrap and compact DNA into chromatin, limiting DNA accessibility to the cellular machineries which require DNA as a template. Histones thereby play a central role in transcription regulation, DNA repair, DNA replication and chromosomal stability. DNA accessibility is regulated via a complex set of post-translational modifications of histones, also called histone code, and nucleosome remodeling. This is Late histone H2A.3, gonadal from Psammechinus miliaris (Green sea urchin).